Consider the following 350-residue polypeptide: Phosphoribosylformylglycinamidine cyclo-ligase (350 aa).

The protein belongs to the AIR synthase family.

It localises to the cytoplasm. It carries out the reaction 2-formamido-N(1)-(5-O-phospho-beta-D-ribosyl)acetamidine + ATP = 5-amino-1-(5-phospho-beta-D-ribosyl)imidazole + ADP + phosphate + H(+). It functions in the pathway purine metabolism; IMP biosynthesis via de novo pathway; 5-amino-1-(5-phospho-D-ribosyl)imidazole from N(2)-formyl-N(1)-(5-phospho-D-ribosyl)glycinamide: step 2/2. This is Phosphoribosylformylglycinamidine cyclo-ligase from Cupriavidus taiwanensis (strain DSM 17343 / BCRC 17206 / CCUG 44338 / CIP 107171 / LMG 19424 / R1) (Ralstonia taiwanensis (strain LMG 19424)).